The following is a 144-amino-acid chain: Galectin b (144 aa).

One can recognise a Galectin domain in the interval 1-138 (DHIDLEFDVG…DAVLRKLCVV (138 aa)).

Its function is as follows. Lectin that binds beta-galactoside and a wide array of complex carbohydrates. This is Galectin b from Aplysina lactuca (Marine sponge).